The chain runs to 288 residues: UDP-3-O-acyl-N-acetylglucosamine deacetylase (288 aa).

The Zn(2+) site is built by H79, H236, and D240. The active-site Proton donor is the H263.

This sequence belongs to the LpxC family. Requires Zn(2+) as cofactor.

The catalysed reaction is a UDP-3-O-[(3R)-3-hydroxyacyl]-N-acetyl-alpha-D-glucosamine + H2O = a UDP-3-O-[(3R)-3-hydroxyacyl]-alpha-D-glucosamine + acetate. It functions in the pathway glycolipid biosynthesis; lipid IV(A) biosynthesis; lipid IV(A) from (3R)-3-hydroxytetradecanoyl-[acyl-carrier-protein] and UDP-N-acetyl-alpha-D-glucosamine: step 2/6. Its function is as follows. Catalyzes the hydrolysis of UDP-3-O-myristoyl-N-acetylglucosamine to form UDP-3-O-myristoylglucosamine and acetate, the committed step in lipid A biosynthesis. The polypeptide is UDP-3-O-acyl-N-acetylglucosamine deacetylase (Rickettsia africae (strain ESF-5)).